Reading from the N-terminus, the 568-residue chain is Proline--tRNA ligase (568 aa).

This sequence belongs to the class-II aminoacyl-tRNA synthetase family. ProS type 1 subfamily. In terms of assembly, homodimer.

The protein resides in the cytoplasm. It carries out the reaction tRNA(Pro) + L-proline + ATP = L-prolyl-tRNA(Pro) + AMP + diphosphate. Catalyzes the attachment of proline to tRNA(Pro) in a two-step reaction: proline is first activated by ATP to form Pro-AMP and then transferred to the acceptor end of tRNA(Pro). As ProRS can inadvertently accommodate and process non-cognate amino acids such as alanine and cysteine, to avoid such errors it has two additional distinct editing activities against alanine. One activity is designated as 'pretransfer' editing and involves the tRNA(Pro)-independent hydrolysis of activated Ala-AMP. The other activity is designated 'posttransfer' editing and involves deacylation of mischarged Ala-tRNA(Pro). The misacylated Cys-tRNA(Pro) is not edited by ProRS. In Listeria innocua serovar 6a (strain ATCC BAA-680 / CLIP 11262), this protein is Proline--tRNA ligase.